The following is a 402-amino-acid chain: MVAHSSEGLSATAPVTGGDVLVDARASLEEKEAPRDVNANTKQATTEEPRIQLPTVDAFRRAIPAHCFERDLVKSIRYLVQDFAALTILYFALPAFEYFGLFGYLVWNIFMGVFGFALFVVGHDCLHGSFSDNQNLNDFIGHIAFSPLFSPYFPWQKSHKLHHAFTNHIDKDHGHVWIQDKDWEAMPSWKRWFNPIPFSGWLKWFPVYTLFGFCDGSHFWPYSSLFVRNSERVQCVISGICCCVCAYIALTIAGSYSNWFWYYWVPLSFFGLMLVIVTYLQHVDDVAEVYEADEWSFVRGQTQTIDRYYGLGLDTTMHHITDGHVAHHFFNKIPHYHLIEATEGVKKVLEPLSDTQYGYKSQVNYDFFARFLWFNYKLDYLVHKTAGIMQFRTTLEEKAKAK.

4 helical membrane passes run 79–99 (LVQDFAALTILYFALPAFEYF), 101–121 (LFGYLVWNIFMGVFGFALFVV), 235–255 (CVISGICCCVCAYIALTIAGS), and 260–280 (FWYYWVPLSFFGLMLVIVTYL).

It belongs to the fatty acid desaturase type 1 family.

It is found in the membrane. It carries out the reaction (9Z,12Z)-octadecadienoyl-CoA + 2 Fe(II)-[cytochrome b5] + O2 + 2 H(+) = (9Z,12Z,15Z)-octadecatrienoyl-CoA + 2 Fe(III)-[cytochrome b5] + 2 H2O. It catalyses the reaction (8Z,11Z,14Z)-eicosatrienoyl-CoA + 2 Fe(II)-[cytochrome b5] + O2 + 2 H(+) = (8Z,11Z,14Z,17Z)-eicosatetraenoyl-CoA + 2 Fe(III)-[cytochrome b5] + 2 H2O. The enzyme catalyses (5Z,8Z,11Z,14Z)-eicosatetraenoyl-CoA + 2 Fe(II)-[cytochrome b5] + O2 + 2 H(+) = (5Z,8Z,11Z,14Z,17Z)-eicosapentaenoyl-CoA + 2 Fe(III)-[cytochrome b5] + 2 H2O. The catalysed reaction is (7Z,10Z,13Z,16Z)-docosatetraenoyl-CoA + 2 Fe(II)-[cytochrome b5] + O2 + 2 H(+) = (7Z,10Z,13Z,16Z,19Z)-docosapentaenoyl-CoA + 2 Fe(III)-[cytochrome b5] + 2 H2O. It carries out the reaction (6Z,9Z,12Z)-octadecatrienoyl-CoA + 2 Fe(II)-[cytochrome b5] + O2 + 2 H(+) = (6Z,9Z,12Z,15Z)-octadecatetraenoyl-CoA + 2 Fe(III)-[cytochrome b5] + 2 H2O. Its pathway is lipid metabolism; polyunsaturated fatty acid biosynthesis. Functionally, omega-3 fatty acid desaturase that recognizes a range of 18- and 20-carbon omega-6 substrates. Introduces a double bond in the fatty acid chain three carbons away from terminal methyl group to biosynthesize n-3 (omega-3) polyunsaturated fatty acids (PUFAs) endogenously (PUFAs are essential for membrane structure and many cellular and physiological processes). Acts on a number of substrates like linoleoyl-CoA ((9Z,12Z)-octadecadienoyl-CoA, 18:2n-6), dihomo-gamma-linolenoyl-CoA ((8Z,11Z,14Z)-eicosatrienoyl-CoA, 20:3n-6), and arachidonoyl-CoA ((5Z,8Z,11Z,14Z)-eicosatetraenoyl-CoA, 20:4n-6), to generate alpha-linolenoyl-CoA ((9Z,12Z,15Z)-octadecatrienoyl-CoA, 18:3n-3), (8Z,11Z,14Z,17Z)-eicosatetraenoyl-CoA (20:4n-3) and (5Z,8Z,11Z,14Z,17Z)-eicosapentaenoyl-CoA (20:5n-3) respectively. Unlike plants, Caenorhabditis elegans desaturases seem to use fatty acyl-CoAs as substrates. The protein is Omega-3 fatty acid desaturase fat-1 (fat-1) of Caenorhabditis elegans.